Reading from the N-terminus, the 228-residue chain is Cytochrome c oxidase subunit 2 (228 aa).

Residues 1-14 are Mitochondrial intermembrane-facing; sequence MPHASQLSLQEAMG. The chain crosses the membrane as a helical span at residues 15 to 45; it reads PTMEEVIFLHDHVLLLTCLMTMVITMFTLTA. Residues 46–59 lie on the Mitochondrial matrix side of the membrane; that stretch reads TTTALTHNDPTEEV. The chain crosses the membrane as a helical span at residues 60–87; that stretch reads EQLEAAWTVAPIMILILTALPSVRSLYL. At 88–228 the chain is on the mitochondrial intermembrane side; the sequence is MEEVFNPYLT…HFEQWLISEQ (141 aa). Residues His-162, Cys-197, Glu-199, Cys-201, His-205, and Met-208 each contribute to the Cu cation site. Residue Glu-199 coordinates Mg(2+).

Belongs to the cytochrome c oxidase subunit 2 family. As to quaternary structure, component of the cytochrome c oxidase (complex IV, CIV), a multisubunit enzyme composed of 14 subunits. The complex is composed of a catalytic core of 3 subunits MT-CO1, MT-CO2 and MT-CO3, encoded in the mitochondrial DNA, and 11 supernumerary subunits COX4I, COX5A, COX5B, COX6A, COX6B, COX6C, COX7A, COX7B, COX7C, COX8 and NDUFA4, which are encoded in the nuclear genome. The complex exists as a monomer or a dimer and forms supercomplexes (SCs) in the inner mitochondrial membrane with NADH-ubiquinone oxidoreductase (complex I, CI) and ubiquinol-cytochrome c oxidoreductase (cytochrome b-c1 complex, complex III, CIII), resulting in different assemblies (supercomplex SCI(1)III(2)IV(1) and megacomplex MCI(2)III(2)IV(2)). Found in a complex with TMEM177, COA6, COX18, COX20, SCO1 and SCO2. Interacts with TMEM177 in a COX20-dependent manner. Interacts with COX20. Interacts with COX16. Requires Cu cation as cofactor.

Its subcellular location is the mitochondrion inner membrane. It carries out the reaction 4 Fe(II)-[cytochrome c] + O2 + 8 H(+)(in) = 4 Fe(III)-[cytochrome c] + 2 H2O + 4 H(+)(out). Functionally, component of the cytochrome c oxidase, the last enzyme in the mitochondrial electron transport chain which drives oxidative phosphorylation. The respiratory chain contains 3 multisubunit complexes succinate dehydrogenase (complex II, CII), ubiquinol-cytochrome c oxidoreductase (cytochrome b-c1 complex, complex III, CIII) and cytochrome c oxidase (complex IV, CIV), that cooperate to transfer electrons derived from NADH and succinate to molecular oxygen, creating an electrochemical gradient over the inner membrane that drives transmembrane transport and the ATP synthase. Cytochrome c oxidase is the component of the respiratory chain that catalyzes the reduction of oxygen to water. Electrons originating from reduced cytochrome c in the intermembrane space (IMS) are transferred via the dinuclear copper A center (CU(A)) of subunit 2 and heme A of subunit 1 to the active site in subunit 1, a binuclear center (BNC) formed by heme A3 and copper B (CU(B)). The BNC reduces molecular oxygen to 2 water molecules using 4 electrons from cytochrome c in the IMS and 4 protons from the mitochondrial matrix. The chain is Cytochrome c oxidase subunit 2 (MT-CO2) from Lycodon semicarinatus (Ryukyu odd-tooth snake).